An 89-amino-acid chain; its full sequence is Small ribosomal subunit protein uS15 (89 aa).

It belongs to the universal ribosomal protein uS15 family. Part of the 30S ribosomal subunit. Forms a bridge to the 50S subunit in the 70S ribosome, contacting the 23S rRNA.

Functionally, one of the primary rRNA binding proteins, it binds directly to 16S rRNA where it helps nucleate assembly of the platform of the 30S subunit by binding and bridging several RNA helices of the 16S rRNA. Forms an intersubunit bridge (bridge B4) with the 23S rRNA of the 50S subunit in the ribosome. This chain is Small ribosomal subunit protein uS15, found in Ureaplasma parvum serovar 3 (strain ATCC 27815 / 27 / NCTC 11736).